Consider the following 258-residue polypeptide: Small ribosomal subunit protein mS35 (258 aa).

A mitochondrion-targeting transit peptide spans 1 to 39 (MAFNPLLSLLKADAIFLGQLSKSSFCATSRAFSVFYFTR).

The protein belongs to the mitochondrion-specific ribosomal protein mS35 family. As to quaternary structure, component of the mitochondrial small ribosomal subunit (mt-SSU). Mature yeast 74S mitochondrial ribosomes consist of a small (37S) and a large (54S) subunit. The 37S small subunit contains a 15S ribosomal RNA (15S mt-rRNA) and at least 32 different proteins. The 54S large subunit contains a 21S rRNA (21S mt-rRNA) and at least 45 different proteins.

The protein localises to the mitochondrion. In terms of biological role, component of the mitochondrial ribosome (mitoribosome), a dedicated translation machinery responsible for the synthesis of mitochondrial genome-encoded proteins, including at least some of the essential transmembrane subunits of the mitochondrial respiratory chain. The mitoribosomes are attached to the mitochondrial inner membrane and translation products are cotranslationally integrated into the membrane. The chain is Small ribosomal subunit protein mS35 (rsm24) from Schizosaccharomyces pombe (strain 972 / ATCC 24843) (Fission yeast).